Reading from the N-terminus, the 480-residue chain is Cytochrome b-c1 complex subunit 1, mitochondrial (480 aa).

Residues 1-34 (MAASVVCRAATAGAQVLLRARRSPALLRTPALRS) constitute a mitochondrion transit peptide. N6-acetyllysine occurs at positions 111 and 138. Lys-163 bears the N6-acetyllysine; alternate mark. Residue Lys-163 is modified to N6-succinyllysine; alternate. Phosphoserine is present on Ser-212. Lys-248 bears the N6-acetyllysine mark.

The protein belongs to the peptidase M16 family. UQCRC1/QCR1 subfamily. In terms of assembly, component of the ubiquinol-cytochrome c oxidoreductase (cytochrome b-c1 complex, complex III, CIII), a multisubunit enzyme composed of 11 subunits. The complex is composed of 3 respiratory subunits cytochrome b, cytochrome c1 and Rieske protein UQCRFS1, 2 core protein subunits UQCRC1/QCR1 and UQCRC2/QCR2, and 6 low-molecular weight protein subunits UQCRH/QCR6, UQCRB/QCR7, UQCRQ/QCR8, UQCR10/QCR9, UQCR11/QCR10 and subunit 9, the cleavage product of Rieske protein UQCRFS1. The complex exists as an obligatory dimer and forms supercomplexes (SCs) in the inner mitochondrial membrane with NADH-ubiquinone oxidoreductase (complex I, CI) and cytochrome c oxidase (complex IV, CIV), resulting in different assemblies (supercomplex SCI(1)III(2)IV(1) and megacomplex MCI(2)III(2)IV(2)). Interacts with UQCC6. Interacts with STMP1. In terms of tissue distribution, expressed in brain, including substantia nigra, striatum, cortex and cerebellum, and in spinal cord, heart, kidney, liver and muscle.

The protein localises to the mitochondrion inner membrane. Component of the ubiquinol-cytochrome c oxidoreductase, a multisubunit transmembrane complex that is part of the mitochondrial electron transport chain which drives oxidative phosphorylation. The respiratory chain contains 3 multisubunit complexes succinate dehydrogenase (complex II, CII), ubiquinol-cytochrome c oxidoreductase (cytochrome b-c1 complex, complex III, CIII) and cytochrome c oxidase (complex IV, CIV), that cooperate to transfer electrons derived from NADH and succinate to molecular oxygen, creating an electrochemical gradient over the inner membrane that drives transmembrane transport and the ATP synthase. The cytochrome b-c1 complex catalyzes electron transfer from ubiquinol to cytochrome c, linking this redox reaction to translocation of protons across the mitochondrial inner membrane, with protons being carried across the membrane as hydrogens on the quinol. In the process called Q cycle, 2 protons are consumed from the matrix, 4 protons are released into the intermembrane space and 2 electrons are passed to cytochrome c. The 2 core subunits UQCRC1/QCR1 and UQCRC2/QCR2 are homologous to the 2 mitochondrial-processing peptidase (MPP) subunits beta-MPP and alpha-MPP respectively, and they seem to have preserved their MPP processing properties. May be involved in the in situ processing of UQCRFS1 into the mature Rieske protein and its mitochondrial targeting sequence (MTS)/subunit 9 when incorporated into complex III. Seems to play an important role in the maintenance of proper mitochondrial function in nigral dopaminergic neurons. The polypeptide is Cytochrome b-c1 complex subunit 1, mitochondrial (UQCRC1) (Homo sapiens (Human)).